The primary structure comprises 291 residues: Proteasome subunit beta (291 aa).

Residues 1–57 (MTWPLPDRLSINSLSGTPAVDLSSFTDFLRRQAPELLPASISGGAPLAGGDAQLPHG) constitute a propeptide, removed in mature form; by autocatalysis. Threonine 58 serves as the catalytic Nucleophile.

This sequence belongs to the peptidase T1B family. In terms of assembly, the 20S proteasome core is composed of 14 alpha and 14 beta subunits that assemble into four stacked heptameric rings, resulting in a barrel-shaped structure. The two inner rings, each composed of seven catalytic beta subunits, are sandwiched by two outer rings, each composed of seven alpha subunits. The catalytic chamber with the active sites is on the inside of the barrel. Has a gated structure, the ends of the cylinder being occluded by the N-termini of the alpha-subunits. Is capped by the proteasome-associated ATPase, ARC.

Its subcellular location is the cytoplasm. It carries out the reaction Cleavage of peptide bonds with very broad specificity.. Its pathway is protein degradation; proteasomal Pup-dependent pathway. With respect to regulation, the formation of the proteasomal ATPase ARC-20S proteasome complex, likely via the docking of the C-termini of ARC into the intersubunit pockets in the alpha-rings, may trigger opening of the gate for substrate entry. Interconversion between the open-gate and close-gate conformations leads to a dynamic regulation of the 20S proteasome proteolysis activity. In terms of biological role, component of the proteasome core, a large protease complex with broad specificity involved in protein degradation. The protein is Proteasome subunit beta of Mycobacterium tuberculosis (strain ATCC 25177 / H37Ra).